Here is a 295-residue protein sequence, read N- to C-terminus: Mycothiol acetyltransferase (295 aa).

1D-myo-inositol 2-(L-cysteinylamino)-2-deoxy-alpha-D-glucopyranoside is bound at residue Glu-30. Position 62-64 (62-64) interacts with acetyl-CoA; it reads LVV. Positions 137–295 constitute an N-acetyltransferase domain; it reads VTVRAFRADS…DDDTHVQYRR (159 aa). 1D-myo-inositol 2-(L-cysteinylamino)-2-deoxy-alpha-D-glucopyranoside-binding residues include Glu-165, Lys-209, and Glu-227. Acetyl-CoA contacts are provided by residues 231 to 233 and 238 to 244; these read VGI and QGRGLGK. Residue Tyr-265 participates in 1D-myo-inositol 2-(L-cysteinylamino)-2-deoxy-alpha-D-glucopyranoside binding.

This sequence belongs to the acetyltransferase family. MshD subfamily. As to quaternary structure, monomer.

The catalysed reaction is 1D-myo-inositol 2-(L-cysteinylamino)-2-deoxy-alpha-D-glucopyranoside + acetyl-CoA = mycothiol + CoA + H(+). Its function is as follows. Catalyzes the transfer of acetyl from acetyl-CoA to desacetylmycothiol (Cys-GlcN-Ins) to form mycothiol. This is Mycothiol acetyltransferase from Nocardioides sp. (strain ATCC BAA-499 / JS614).